The primary structure comprises 298 residues: MEDRYGREIRSFRLSITPKCNLKCFYCHKEGRNEEHGKLMSADEIGKIVKSSLEFGVRKIKISGGEPLLRTDLPEIIENIKDDQIKDISLTTNGILLEKYAQKLKDAGLDRVNVSLDTLDPEQYKQITAGGNIESVKKGIEKAIEVGLTPLKVNFLAMDCTINQLPAIMDYCRKIGAILQVIEFIPMEEELKHHHIDVVPIEEEIGKKADQVFTRKFMQNRKKYIVDGLEVEFVRPMDNTEFCGHCTRIRLTYDGYLKPCLLRDDNLVDVANPLRNGEDIRKYFIKCIEEREPFCKAQ.

The region spanning 4–221 is the Radical SAM core domain; it reads RYGREIRSFR…VFTRKFMQNR (218 aa). Arg-13 serves as a coordination point for GTP. The [4Fe-4S] cluster site is built by Cys-20 and Cys-24. Tyr-26 is a binding site for S-adenosyl-L-methionine. Residue Cys-27 coordinates [4Fe-4S] cluster. Lys-61 provides a ligand contact to GTP. Position 65 (Gly-65) interacts with S-adenosyl-L-methionine. GTP is bound at residue Thr-91. Ser-115 is a binding site for S-adenosyl-L-methionine. Lys-152 contributes to the GTP binding site. [4Fe-4S] cluster is bound by residues Cys-243 and Cys-246. 248–250 provides a ligand contact to GTP; it reads RIR. Position 260 (Cys-260) interacts with [4Fe-4S] cluster.

The protein belongs to the radical SAM superfamily. MoaA family. The cofactor is [4Fe-4S] cluster.

The enzyme catalyses GTP + AH2 + S-adenosyl-L-methionine = (8S)-3',8-cyclo-7,8-dihydroguanosine 5'-triphosphate + 5'-deoxyadenosine + L-methionine + A + H(+). It functions in the pathway cofactor biosynthesis; molybdopterin biosynthesis. Catalyzes the cyclization of GTP to (8S)-3',8-cyclo-7,8-dihydroguanosine 5'-triphosphate. This chain is Probable GTP 3',8-cyclase, found in Methanococcus maripaludis (strain C7 / ATCC BAA-1331).